Consider the following 628-residue polypeptide: Forkhead box protein O (628 aa).

Disordered regions lie at residues 39–77 (RARS…DSQQ), 182–205 (KSVR…RAKK), 217–269 (GLND…RLSP), 316–359 (QQQG…APGY), and 389–415 (NSVT…YSNV). Position 44 is a phosphothreonine; by PKB/AKT1 (T44). Residues 63–77 (TKASNQQLAPGDSQQ) show a composition bias toward polar residues. S75 carries the phosphoserine modification. Positions 95–201 (WGNLSYADLI…ETSRYEKRRG (107 aa)) form a DNA-binding region, fork-head. A Phosphoserine; by PKB/AKT1 modification is found at S190. 2 stretches are compositionally biased toward polar residues: residues 221–230 (ATPSPSSSVS) and 256–265 (RASSNASSCG). S259 bears the Phosphoserine; by PKB/AKT1 mark. Residues S262, S263, and S268 each carry the phosphoserine modification. Over residues 328-337 (SQPPPPPYQP) the composition is skewed to pro residues. Over residues 338–351 (PQHQQAQQQQSPYA) the composition is skewed to low complexity. Over residues 402 to 414 (SEPSSDSLNTYSN) the composition is skewed to polar residues.

Interacts with melt.

The protein localises to the cytoplasm. The protein resides in the nucleus. Functionally, transcription factor involved in the regulation of the insulin signaling pathway. Consistently activates both the downstream target Thor\d4EBP and the feedback control target InR. Involved in negative regulation of the cell cycle, modulating cell growth and proliferation. In response to cellular stresses, such as nutrient deprivation or increased levels of reactive oxygen species, foxo is activated and inhibits growth through the action of target genes such as Thor. Foxo activated in the adult fat body can regulate lifespan in adults; an insulin peptide itself may function as one secondary messenger of insulin-regulated aging. Also regulates Lip4, homolog of human acid lipases, thereby acting as a key modulator of lipid metabolism by insulin signaling and integrates insulin responses to glucose and lipid homeostasis. The sequence is that of Forkhead box protein O from Drosophila yakuba (Fruit fly).